The following is a 419-amino-acid chain: Carboxypeptidase A1 (419 aa).

A signal peptide spans 1–16; that stretch reads MRGLLVLSVLLGAVFG. Positions 17–110 are cleaved as a propeptide — activation peptide; that stretch reads KEDFVGHQVL…QEQMFAFRSR (94 aa). In terms of domain architecture, Peptidase M14 spans 121 to 414; that stretch reads TYHTLEEIYD…LALLTIMEHT (294 aa). 2 residues coordinate Zn(2+): His179 and Glu182. Residues 179-182, Arg237, and 254-255 each bind substrate; these read HSRE and NR. Cysteines 248 and 271 form a disulfide. His306 serves as a coordination point for Zn(2+). Substrate contacts are provided by residues 307–308 and Tyr358; that span reads SY. The Proton donor/acceptor role is filled by Glu380.

The protein belongs to the peptidase M14 family. In terms of assembly, monomer. May form a complex with proelastase 2. Zn(2+) is required as a cofactor.

Its subcellular location is the secreted. The catalysed reaction is Release of a C-terminal amino acid, but little or no action with -Asp, -Glu, -Arg, -Lys or -Pro.. The enzyme catalyses leukotriene C4 + H2O = leukotriene F4 + glycine. Its activity is regulated as follows. Inhibited by interaction with the S.magnifica carboxypeptidase inhibitor SmCI. Carboxypeptidase that catalyzes the release of a C-terminal amino acid, but has little or no action with -Asp, -Glu, -Arg, -Lys or -Pro. Catalyzes the conversion of leukotriene C4 to leukotriene F4 via the hydrolysis of an amide bond. The polypeptide is Carboxypeptidase A1 (Homo sapiens (Human)).